A 512-amino-acid chain; its full sequence is Cytochrome P450 4d1 (512 aa).

Residues E316 and C456 each coordinate heme.

It belongs to the cytochrome P450 family. Heme is required as a cofactor.

The protein resides in the endoplasmic reticulum membrane. The protein localises to the microsome membrane. Functionally, involved in the metabolism of insect hormones and in the breakdown of synthetic insecticides. The protein is Cytochrome P450 4d1 (Cyp4d1) of Drosophila melanogaster (Fruit fly).